A 449-amino-acid polypeptide reads, in one-letter code: tRNA-2-methylthio-N(6)-dimethylallyladenosine synthase (449 aa).

The region spanning 2-119 (KGLFIRTYGC…LPEMIARASR (118 aa)) is the MTTase N-terminal domain. [4Fe-4S] cluster contacts are provided by Cys11, Cys47, Cys82, Cys157, Cys161, and Cys164. The 236-residue stretch at 143–378 (EADGPAAFVS…QALLREQQTE (236 aa)) folds into the Radical SAM core domain. The TRAM domain occupies 381-443 (ASQIGKTLPV…LNSLTGELVR (63 aa)).

The protein belongs to the methylthiotransferase family. MiaB subfamily. As to quaternary structure, monomer. [4Fe-4S] cluster is required as a cofactor.

It localises to the cytoplasm. It carries out the reaction N(6)-dimethylallyladenosine(37) in tRNA + (sulfur carrier)-SH + AH2 + 2 S-adenosyl-L-methionine = 2-methylsulfanyl-N(6)-dimethylallyladenosine(37) in tRNA + (sulfur carrier)-H + 5'-deoxyadenosine + L-methionine + A + S-adenosyl-L-homocysteine + 2 H(+). In terms of biological role, catalyzes the methylthiolation of N6-(dimethylallyl)adenosine (i(6)A), leading to the formation of 2-methylthio-N6-(dimethylallyl)adenosine (ms(2)i(6)A) at position 37 in tRNAs that read codons beginning with uridine. This is tRNA-2-methylthio-N(6)-dimethylallyladenosine synthase from Hyphomonas neptunium (strain ATCC 15444).